The following is a 210-amino-acid chain: uncharacterized protein (210 aa).

Residues 1 to 20 (MRVITLSGITLFLLASLASA) form the signal peptide. Residues 21-175 (IELTFKLENQ…YSTVKSTQAR (155 aa)) are Lumenal-facing. The GOLD domain maps to 32–115 (KQCYYLDSFH…DKIVTMEITM (84 aa)). N-linked (GlcNAc...) asparagine glycosylation occurs at Asn-165. The helical transmembrane segment at 176 to 196 (IFWFSLAESIMVVALSALQVF) threads the bilayer. Topologically, residues 197–210 (IVKTFFKRSGRRGV) are cytoplasmic.

It belongs to the EMP24/GP25L family.

It localises to the endoplasmic reticulum membrane. This is an uncharacterized protein from Schizosaccharomyces pombe (strain 972 / ATCC 24843) (Fission yeast).